A 557-amino-acid polypeptide reads, in one-letter code: Glypican-1 (557 aa).

Positions 1–23 (MELRTRGWWLLCAAAALVVCARG) are cleaved as a signal peptide. Cystine bridges form between Cys32–Cys68, Cys62–Cys255, Cys69–Cys258, Cys190–Cys342, Cys245–Cys278, Cys267–Cys414, and Cys271–Cys400. N-linked (GlcNAc...) asparagine glycosylation is found at Asn79 and Asn116. Positions 477–531 (FQDASDDGSGSGSGGGCPDDTCGRRVSKKSSSSRTPLTHALPGLSEQEGQKTSAA) are disordered. Ser485, Ser487, and Ser489 each carry an O-linked (Xyl...) (heparan sulfate) serine glycan. Ser529 carries GPI-anchor amidated serine lipidation. Residues 530-557 (AATCPEPHSFFLLFLVTLVLAAARPRWR) constitute a propeptide, removed in mature form.

This sequence belongs to the glypican family. S-nitrosylated in a Cu(2+)-dependent manner. Nitric acid (NO) is released from the nitrosylated cysteines by ascorbate or by some other reducing agent, in a Cu(2+) or Zn(2+) dependent manner. This free nitric oxide is then capable of cleaving the heparan sulfate side chains. In terms of processing, N- and O-glycosylated. N-glycosylation is mainly of the complex type containing sialic acid. O-glycosylated with heparan sulfate. The heparan sulfate chains can be cleaved either by the action of heparanase or, degraded by a deaminative process that uses nitric oxide (NO) released from the S-nitrosylated cysteines. This process is triggered by ascorbate, or by some other reducing agent, in a Cu(2+)- or Zn(2+) dependent manner. Cu(2+) ions are provided by ceruloproteins such as APP, PRNP or CP which associate with GCP1 in intracellular compartments or lipid rafts. Post-translationally, this cell-associated glypican is further processed to give rise to a medium-released species.

The protein localises to the cell membrane. The protein resides in the endosome. It is found in the secreted. Its subcellular location is the extracellular space. In terms of biological role, cell surface proteoglycan that bears heparan sulfate. Binds, via the heparan sulfate side chains, alpha-4 (V) collagen and participates in Schwann cell myelination. May act as a catalyst in increasing the rate of conversion of prion protein PRPN(C) to PRNP(Sc) via associating (via the heparan sulfate side chains) with both forms of PRPN, targeting them to lipid rafts and facilitating their interaction. Required for proper skeletal muscle differentiation by sequestering FGF2 in lipid rafts preventing its binding to receptors (FGFRs) and inhibiting the FGF-mediated signaling. Binds Cu(2+) or Zn(2+) ions. The polypeptide is Glypican-1 (Gpc1) (Mus musculus (Mouse)).